Reading from the N-terminus, the 361-residue chain is Phosphoserine aminotransferase (361 aa).

Arg-42 contacts L-glutamate. Pyridoxal 5'-phosphate contacts are provided by residues 76–77 (AR), Trp-102, Thr-153, Asp-173, and Gln-196. An N6-(pyridoxal phosphate)lysine modification is found at Lys-197. Pyridoxal 5'-phosphate is bound at residue 238–239 (NT).

It belongs to the class-V pyridoxal-phosphate-dependent aminotransferase family. SerC subfamily. Homodimer. Pyridoxal 5'-phosphate serves as cofactor.

It localises to the cytoplasm. It catalyses the reaction O-phospho-L-serine + 2-oxoglutarate = 3-phosphooxypyruvate + L-glutamate. The catalysed reaction is 4-(phosphooxy)-L-threonine + 2-oxoglutarate = (R)-3-hydroxy-2-oxo-4-phosphooxybutanoate + L-glutamate. Its pathway is amino-acid biosynthesis; L-serine biosynthesis; L-serine from 3-phospho-D-glycerate: step 2/3. It functions in the pathway cofactor biosynthesis; pyridoxine 5'-phosphate biosynthesis; pyridoxine 5'-phosphate from D-erythrose 4-phosphate: step 3/5. In terms of biological role, catalyzes the reversible conversion of 3-phosphohydroxypyruvate to phosphoserine and of 3-hydroxy-2-oxo-4-phosphonooxybutanoate to phosphohydroxythreonine. The chain is Phosphoserine aminotransferase from Pectobacterium carotovorum subsp. carotovorum (strain PC1).